The following is a 592-amino-acid chain: 2-succinyl-5-enolpyruvyl-6-hydroxy-3-cyclohexene-1-carboxylate synthase (592 aa).

The protein belongs to the TPP enzyme family. MenD subfamily. In terms of assembly, homodimer. Mg(2+) is required as a cofactor. Requires Mn(2+) as cofactor. Thiamine diphosphate serves as cofactor.

The enzyme catalyses isochorismate + 2-oxoglutarate + H(+) = 5-enolpyruvoyl-6-hydroxy-2-succinyl-cyclohex-3-ene-1-carboxylate + CO2. It functions in the pathway quinol/quinone metabolism; 1,4-dihydroxy-2-naphthoate biosynthesis; 1,4-dihydroxy-2-naphthoate from chorismate: step 2/7. It participates in quinol/quinone metabolism; menaquinone biosynthesis. Its function is as follows. Catalyzes the thiamine diphosphate-dependent decarboxylation of 2-oxoglutarate and the subsequent addition of the resulting succinic semialdehyde-thiamine pyrophosphate anion to isochorismate to yield 2-succinyl-5-enolpyruvyl-6-hydroxy-3-cyclohexene-1-carboxylate (SEPHCHC). The chain is 2-succinyl-5-enolpyruvyl-6-hydroxy-3-cyclohexene-1-carboxylate synthase from Leifsonia xyli subsp. xyli (strain CTCB07).